Consider the following 102-residue polypeptide: MNKSGFLIFCLILLTLSQGVPLSRNTRCSCIEISNGSVNPRSLEKLEVIPASQSCPRVEIIATMKKNGEKRCLNPESKTIKNLLKAINKQRTKRSPRTRKEA.

The first 19 residues, 1-19 (MNKSGFLIFCLILLTLSQG), serve as a signal peptide directing secretion. Arg24 carries the post-translational modification Citrulline. 2 disulfides stabilise this stretch: Cys28/Cys55 and Cys30/Cys72.

It belongs to the intercrine alpha (chemokine CxC) family. In terms of assembly, monomer, dimer, and tetramer. Interacts with CXCR3 (via N-terminus).

The protein localises to the secreted. Its function is as follows. Pro-inflammatory cytokine that is involved in a wide variety of processes such as chemotaxis, differentiation, and activation of peripheral immune cells, regulation of cell growth, apoptosis and modulation of angiostatic effects. Plays thereby an important role during viral infections by stimulating the activation and migration of immune cells to the infected sites. Mechanistically, binding of CXCL10 to the CXCR3 receptor activates G protein-mediated signaling and results in downstream activation of phospholipase C-dependent pathway, an increase in intracellular calcium production and actin reorganization. In turn, recruitment of activated Th1 lymphocytes occurs at sites of inflammation. Activation of the CXCL10/CXCR3 axis also plays an important role in neurons in response to brain injury for activating microglia, the resident macrophage population of the central nervous system, and directing them to the lesion site. This recruitment is an essential element for neuronal reorganization. This Bos taurus (Bovine) protein is C-X-C motif chemokine 10 (CXCL10).